The following is a 1700-amino-acid chain: uncharacterized protein (1700 aa).

The helical transmembrane segment at 986 to 1006 (APITQYPVLCYLLYLLSYYLV) threads the bilayer. Coiled-coil stretches lie at residues 1246–1278 (DQNAENLLRNIHNQQIKYENQQKVVEDFIREIK) and 1657–1684 (QDMDGEPQEADELEDLKEEAESLDIEGD). The segment at 1650–1700 (DTEPDIMQDMDGEPQEADELEDLKEEAESLDIEGDYFAEEDEDYAQEDFIE) is disordered. The span at 1651-1700 (TEPDIMQDMDGEPQEADELEDLKEEAESLDIEGDYFAEEDEDYAQEDFIE) shows a compositional bias: acidic residues.

Its subcellular location is the host membrane. It is found in the virion. This is an uncharacterized protein from Acanthamoeba polyphaga (Amoeba).